The primary structure comprises 242 residues: Uridylate kinase (242 aa).

17-20 (KLSG) serves as a coordination point for ATP. Residue glycine 59 participates in UMP binding. The ATP site is built by glycine 60 and arginine 64. Residues aspartate 79 and 140-147 (LGNPFFTT) contribute to the UMP site. The ATP site is built by threonine 167, tyrosine 173, and aspartate 176.

Belongs to the UMP kinase family. Homohexamer.

It is found in the cytoplasm. It carries out the reaction UMP + ATP = UDP + ADP. Its pathway is pyrimidine metabolism; CTP biosynthesis via de novo pathway; UDP from UMP (UMPK route): step 1/1. With respect to regulation, inhibited by UTP. Catalyzes the reversible phosphorylation of UMP to UDP. The chain is Uridylate kinase from Buchnera aphidicola subsp. Baizongia pistaciae (strain Bp).